We begin with the raw amino-acid sequence, 552 residues long: Ferry endosomal RAB5 effector complex subunit 3 (552 aa).

The tract at residues 383-403 (LKESLDSGNQNGGNDDKTKNA) is disordered.

As to quaternary structure, component of the FERRY complex composed of five subunits, TBCK, PPP1R21, FERRY3, CRYZL1 and GATD1 with a ratio of 1:2:1:2:4, respectively.

The protein resides in the cytoplasm. Its subcellular location is the early endosome. Its function is as follows. Component of the FERRY complex (Five-subunit Endosomal Rab5 and RNA/ribosome intermediary). The FERRY complex directly interacts with mRNAs and RAB5A, and functions as a RAB5A effector involved in the localization and the distribution of specific mRNAs most likely by mediating their endosomal transport. The complex recruits mRNAs and ribosomes to early endosomes through direct mRNA-interaction. Plays a role in mast cell degranulation. This chain is Ferry endosomal RAB5 effector complex subunit 3, found in Homo sapiens (Human).